Reading from the N-terminus, the 184-residue chain is Lactoylglutathione lyase (184 aa).

Alanine 2 carries the post-translational modification N-acetylalanine. Cysteines 19 and 20 form a disulfide. Residues 31-177 (LLQQTMLRIK…DGYWIEILNP (147 aa)) form the VOC domain. Glutamine 34 and arginine 38 together coordinate substrate. Glutamine 34 contributes to the Zn(2+) binding site. Residue lysine 88 is modified to N6-succinyllysine. Glutamate 100 serves as a coordination point for Zn(2+). Asparagine 104 contacts substrate. Threonine 107 carries the post-translational modification Phosphothreonine. Positions 123 and 127 each coordinate substrate. A Zn(2+)-binding site is contributed by histidine 127. The residue at position 139 (cysteine 139) is an S-glutathionyl cysteine. Lysine 148 bears the N6-acetyllysine; alternate mark. Lysine 148 is subject to N6-succinyllysine; alternate. Residue 157-158 (KM) participates in substrate binding. Zn(2+) is bound at residue glutamate 173. Glutamate 173 functions as the Proton donor/acceptor in the catalytic mechanism.

The protein belongs to the glyoxalase I family. In terms of assembly, homodimer. Requires Zn(2+) as cofactor. In terms of processing, glutathionylation at Cys-139 inhibits enzyme activity. Post-translationally, phosphorylated at Thr-107 in the presence of CaMK2. However, this is a consensus site for phosphorylation by CK2 so phosphorylation may be mediated by CK2 rather than CaMK2. Phosphorylation is induced by TNF and suppresses the TNF-induced transcriptional activity of NF-kappa-B. Exists in a nitric oxide (NO)-modified form. The exact nature of the modification is unknown, but it suppresses the TNF-induced transcriptional activity of NF-kappa-B.

It carries out the reaction (R)-S-lactoylglutathione = methylglyoxal + glutathione. It functions in the pathway secondary metabolite metabolism; methylglyoxal degradation; (R)-lactate from methylglyoxal: step 1/2. Subject to competitive inhibition by methyl-gerfelin. Its function is as follows. Catalyzes the conversion of hemimercaptal, formed from methylglyoxal and glutathione, to S-lactoylglutathione. Involved in the regulation of TNF-induced transcriptional activity of NF-kappa-B. Required for normal osteoclastogenesis. This is Lactoylglutathione lyase (Glo1) from Mus musculus (Mouse).